Reading from the N-terminus, the 268-residue chain is Tryptophan synthase alpha chain (268 aa).

Residues glutamate 49 and aspartate 60 each act as proton acceptor in the active site.

It belongs to the TrpA family. As to quaternary structure, tetramer of two alpha and two beta chains.

The catalysed reaction is (1S,2R)-1-C-(indol-3-yl)glycerol 3-phosphate + L-serine = D-glyceraldehyde 3-phosphate + L-tryptophan + H2O. It functions in the pathway amino-acid biosynthesis; L-tryptophan biosynthesis; L-tryptophan from chorismate: step 5/5. In terms of biological role, the alpha subunit is responsible for the aldol cleavage of indoleglycerol phosphate to indole and glyceraldehyde 3-phosphate. This chain is Tryptophan synthase alpha chain, found in Yersinia pseudotuberculosis serotype O:3 (strain YPIII).